The sequence spans 407 residues: FMN-dependent alpha-hydroxy acid dehydrogenase PB1A11.03 (407 aa).

The FMN hydroxy acid dehydrogenase domain occupies 28 to 406 (QRPQITVDGR…DLNRDVLYKE (379 aa)). Tyr54 provides a ligand contact to a 2-oxocarboxylate. Ser136 and Gln158 together coordinate FMN. An a 2-oxocarboxylate-binding site is contributed by Tyr160. Thr188 serves as a coordination point for FMN. Arg197 serves as a coordination point for a 2-oxocarboxylate. FMN is bound at residue Lys277. Residue His301 is the Proton acceptor of the active site. Arg304 serves as a coordination point for a 2-oxocarboxylate. FMN is bound by residues 332–336 (DSGVR) and 355–356 (GR).

This sequence belongs to the FMN-dependent alpha-hydroxy acid dehydrogenase family. Requires FMN as cofactor.

It localises to the cytoplasm. The protein resides in the nucleus. This Schizosaccharomyces pombe (strain 972 / ATCC 24843) (Fission yeast) protein is FMN-dependent alpha-hydroxy acid dehydrogenase PB1A11.03.